A 203-amino-acid polypeptide reads, in one-letter code: NADH-quinone oxidoreductase subunit C (203 aa).

Belongs to the complex I 30 kDa subunit family. NDH-1 is composed of 14 different subunits. Subunits NuoB, C, D, E, F, and G constitute the peripheral sector of the complex.

It is found in the cell inner membrane. The enzyme catalyses a quinone + NADH + 5 H(+)(in) = a quinol + NAD(+) + 4 H(+)(out). Functionally, NDH-1 shuttles electrons from NADH, via FMN and iron-sulfur (Fe-S) centers, to quinones in the respiratory chain. The immediate electron acceptor for the enzyme in this species is believed to be ubiquinone. Couples the redox reaction to proton translocation (for every two electrons transferred, four hydrogen ions are translocated across the cytoplasmic membrane), and thus conserves the redox energy in a proton gradient. The sequence is that of NADH-quinone oxidoreductase subunit C from Methylibium petroleiphilum (strain ATCC BAA-1232 / LMG 22953 / PM1).